The sequence spans 516 residues: 3-ketoacyl-CoA synthase 4 (516 aa).

The next 2 membrane-spanning stretches (helical) occupy residues Leu-48–Ala-68 and Leu-87–Thr-107. Residues Tyr-104–Leu-393 form the FAE domain. Residues Cys-248, His-327, His-411, His-415, His-444, and Asn-448 contribute to the active site.

It belongs to the thiolase-like superfamily. Chalcone/stilbene synthases family. As to expression, expressed at low levels in siliques, flowers, leaves and stems.

Its subcellular location is the membrane. It catalyses the reaction a very-long-chain acyl-CoA + malonyl-CoA + H(+) = a very-long-chain 3-oxoacyl-CoA + CO2 + CoA. It participates in lipid metabolism; fatty acid biosynthesis. The chain is 3-ketoacyl-CoA synthase 4 from Arabidopsis thaliana (Mouse-ear cress).